Here is a 512-residue protein sequence, read N- to C-terminus: mRNA export factor (512 aa).

The span at 1 to 15 (MATDIDMLIDLGLDL) shows a compositional bias: low complexity. The disordered stretch occupies residues 1-243 (MATDIDMLID…APERKAPAAD (243 aa)). The Nuclear export signal motif lies at 5–17 (IDMLIDLGLDLSD). A phosphoserine; by host mark is found at S16 and S18. Acidic residues-rich tracts occupy residues 16-26 (SDSDLDEDPPE) and 35-51 (LESDSSGECSSSDEDME). The segment at 104–112 (VWSRLGARR) is interaction with host ALYREF. The Nuclear localization signal signature appears at 110–138 (ARRPSCSPEQHGGKVARLQPPPTKAQPAR). S114 is subject to Phosphoserine; by host. The residue at position 138 (R138) is a Dimethylated arginine; by host. An RGG-box region spans residues 138-152 (RGGRRGRRRGRGRGG). Over residues 139 to 149 (GGRRGRRRGRG) the composition is skewed to basic residues. Residue R148 is modified to Omega-N-methylarginine; by host. R150 carries the dimethylated arginine; by host modification. A compositionally biased stretch (pro residues) spans 214–233 (APPPLMTLAIAPPPADPRAP). Residues C400, H479, C483, and C488 each contribute to the Zn(2+) site. The CHC2-type zinc-finger motif lies at 400-488 (CYLKARGLCG…HRQECSSRVC (89 aa)). The interval 500 to 512 (YVHGKYFYCNSLF) is important for homodimerization.

The protein belongs to the HHV-1 ICP27 protein family. Homodimer. Interacts with host RBP1; this interaction facilitates the RNA polymerase recruitment to viral transcription sites. Interacts (via the RGG box) with host ALYREF/THOC4; this interaction recruits ALYREF to viral replication compartments and probably directs viral mRNA to the TAP/NFX1 pathway. Interacts with host ALYREF2. Interacts (via the RGG box) with host SRPK1; this interaction relocalizes SRPK1 to the nucleus and seems to alter its activity. Interacts with ICP4; this interaction modulates ICP4 DNA-binding activity. Interacts with host NXF1; this interaction allows efficient export of HHV-1 early and late transcripts. Post-translationally, methylated within the RGG box possibly by host PRMT1. When hypomethylated, ICP27 is exported to the cytoplasm earlier and more rapidly. Phosphorylated.

The protein resides in the host cytoplasm. It is found in the host nucleus. Its function is as follows. Multifunctional regulator of the expression of viral genes that contributes to the shutoff of host protein synthesis and mediates nuclear export of viral intronless mRNAs. Early in infection, this immediate early (EI) protein mediates the inhibition of cellular splicing. This results in the accumulation of unprocessed 3'end pre-mRNAs which can't be exported from the nucleus. Cellular protein synthesis is thereby shut off early after virus infection. Later in the infection, it helps recruit cellular RNA polymerase II to viral replication sites and promotes the nuclear export of viral intronless mRNAs by interacting with mRNAs and host NXF1/TAP. ICP27 binds to NUP62 which may provide facilitated viral mRNA export and may indirectly compete with some host cell transport receptors for binding and inhibit cellular nucleocytoplasmic transport pathways. Also stimulates translation of viral transcripts. Repression of host gene expression blocks the cell cycle at the G1 phase and prevents apoptosis. Seems to silence the 3' splice site of the promyelocytic leukemia (PML) intron 7a, thereby switching PML isoforms from PML-II to PML-V. This could be linked to the accelerated mRNA export induced by ICP27 which might not provide sufficient time for PML pre-mRNA to be spliced in the nucleus. In Homo sapiens (Human), this protein is mRNA export factor.